We begin with the raw amino-acid sequence, 212 residues long: N-(5'-phosphoribosyl)anthranilate isomerase (212 aa).

It belongs to the TrpF family.

The catalysed reaction is N-(5-phospho-beta-D-ribosyl)anthranilate = 1-(2-carboxyphenylamino)-1-deoxy-D-ribulose 5-phosphate. The protein operates within amino-acid biosynthesis; L-tryptophan biosynthesis; L-tryptophan from chorismate: step 3/5. The polypeptide is N-(5'-phosphoribosyl)anthranilate isomerase (Roseiflexus castenholzii (strain DSM 13941 / HLO8)).